Consider the following 673-residue polypeptide: UvrABC system protein B (673 aa).

Residues 26–183 (ANFEAGLAKQ…RHLTDLQYTR (158 aa)) enclose the Helicase ATP-binding domain. ATP is bound at residue 39–46 (GVTGSGKT). Residues 92 to 115 (YYDYYQPEAYVPSSDTFIEKDSSI) carry the Beta-hairpin motif. The region spanning 431–597 (QVDDLMSEIH…SVERPISDIM (167 aa)) is the Helicase C-terminal domain. The interval 601-631 (REDAAEKKSGKGRSKSRQVAEETPDYRAMKP) is disordered. A compositionally biased stretch (basic and acidic residues) spans 618–630 (QVAEETPDYRAMK). One can recognise a UVR domain in the interval 635–670 (AGKLKSLEQKMYQHAKDLEFEAAAQIRDQIQKLKTA).

The protein belongs to the UvrB family. As to quaternary structure, forms a heterotetramer with UvrA during the search for lesions. Interacts with UvrC in an incision complex.

It localises to the cytoplasm. Its function is as follows. The UvrABC repair system catalyzes the recognition and processing of DNA lesions. A damage recognition complex composed of 2 UvrA and 2 UvrB subunits scans DNA for abnormalities. Upon binding of the UvrA(2)B(2) complex to a putative damaged site, the DNA wraps around one UvrB monomer. DNA wrap is dependent on ATP binding by UvrB and probably causes local melting of the DNA helix, facilitating insertion of UvrB beta-hairpin between the DNA strands. Then UvrB probes one DNA strand for the presence of a lesion. If a lesion is found the UvrA subunits dissociate and the UvrB-DNA preincision complex is formed. This complex is subsequently bound by UvrC and the second UvrB is released. If no lesion is found, the DNA wraps around the other UvrB subunit that will check the other stand for damage. This is UvrABC system protein B from Xanthomonas oryzae pv. oryzae (strain MAFF 311018).